A 237-amino-acid polypeptide reads, in one-letter code: Lipid A 1-diphosphate synthase (237 aa).

The Cytoplasmic portion of the chain corresponds to 1-5 (MIKNL). The helical transmembrane segment at 6 to 26 (PQIVLLNIVGLALFLSWYIPV) threads the bilayer. Residues 27-62 (NHGFWLPIDADIFYFFNQKLVESKAFLWLVALTNNR) lie on the Periplasmic side of the membrane. The chain crosses the membrane as a helical span at residues 63 to 83 (AFDGCSLLAMGMLMLSFWLKE). The Cytoplasmic segment spans residues 84-90 (NAPGRRR). A helical membrane pass occupies residues 91 to 111 (IVIIGLVMLLTAVVLNQLGQA). The Periplasmic portion of the chain corresponds to 112–145 (LIPVKRASPTLTFTDINRVSELLSVPTKDASRDS). Position 167 (K167) is a topological domain, cytoplasmic. A helical transmembrane segment spans residues 168 to 188 (VAGLIALIIFVVFAFPRVMIG). Residues 189-194 (AHWFTD) lie on the Periplasmic side of the membrane. A helical membrane pass occupies residues 195-215 (IIVGSMTVILIGLPWVLLTPL). Residues 216 to 237 (SDRLITFFDKSLPGKNKHFQNK) are Cytoplasmic-facing.

It belongs to the LpxT phosphotransferase family.

It localises to the cell inner membrane. The catalysed reaction is di-trans,octa-cis-undecaprenyl diphosphate + alpha-Kdo-(2-&gt;4)-alpha-Kdo-(2-&gt;6)-lipid A (E. coli) = (Kdo)2-lipid A 1-diphosphate + di-trans,octa-cis-undecaprenyl phosphate. It participates in bacterial outer membrane biogenesis; lipopolysaccharide biosynthesis. Inhibited by BasR. This regulation does not occur at the level of transcription, but rather following the assembly of LpxT into the inner membrane. Involved in the modification of the lipid A domain of lipopolysaccharides (LPS). Transfers a phosphate group from undecaprenyl pyrophosphate (C55-PP) to lipid A to form lipid A 1-diphosphate. Contributes to the recycling of undecaprenyl phosphate (C55-P). In vitro, has low undecaprenyl-diphosphate phosphatase activity. The chain is Lipid A 1-diphosphate synthase from Escherichia coli (strain K12).